Reading from the N-terminus, the 315-residue chain is Aspartate carbamoyltransferase catalytic subunit (315 aa).

Carbamoyl phosphate contacts are provided by Arg54 and Thr55. Lys82 serves as a coordination point for L-aspartate. Carbamoyl phosphate contacts are provided by Arg104, His134, and Gln137. 2 residues coordinate L-aspartate: Arg174 and Arg229. Positions 270 and 271 each coordinate carbamoyl phosphate.

It belongs to the aspartate/ornithine carbamoyltransferase superfamily. ATCase family. Heterododecamer (2C3:3R2) of six catalytic PyrB chains organized as two trimers (C3), and six regulatory PyrI chains organized as three dimers (R2).

The enzyme catalyses carbamoyl phosphate + L-aspartate = N-carbamoyl-L-aspartate + phosphate + H(+). It participates in pyrimidine metabolism; UMP biosynthesis via de novo pathway; (S)-dihydroorotate from bicarbonate: step 2/3. Its function is as follows. Catalyzes the condensation of carbamoyl phosphate and aspartate to form carbamoyl aspartate and inorganic phosphate, the committed step in the de novo pyrimidine nucleotide biosynthesis pathway. The sequence is that of Aspartate carbamoyltransferase catalytic subunit from Leifsonia xyli subsp. xyli (strain CTCB07).